We begin with the raw amino-acid sequence, 72 residues long: Translation initiation factor IF-1 (72 aa).

One can recognise an S1-like domain in the interval 1 to 72; it reads MAKDDVIQMQ…SRARIVFRTK (72 aa).

The protein belongs to the IF-1 family. In terms of assembly, component of the 30S ribosomal translation pre-initiation complex which assembles on the 30S ribosome in the order IF-2 and IF-3, IF-1 and N-formylmethionyl-tRNA(fMet); mRNA recruitment can occur at any time during PIC assembly.

It localises to the cytoplasm. One of the essential components for the initiation of protein synthesis. Stabilizes the binding of IF-2 and IF-3 on the 30S subunit to which N-formylmethionyl-tRNA(fMet) subsequently binds. Helps modulate mRNA selection, yielding the 30S pre-initiation complex (PIC). Upon addition of the 50S ribosomal subunit IF-1, IF-2 and IF-3 are released leaving the mature 70S translation initiation complex. This is Translation initiation factor IF-1 from Herminiimonas arsenicoxydans.